The following is a 503-amino-acid chain: tRNA-guanine(15) transglycosylase (503 aa).

Residue Asp-86 is the Nucleophile of the active site. Asp-121 provides a ligand contact to substrate. Residues Cys-278, Cys-280, and Cys-283 each coordinate Zn(2+).

It belongs to the archaeosine tRNA-ribosyltransferase family. Requires Zn(2+) as cofactor.

It carries out the reaction guanosine(15) in tRNA + 7-cyano-7-deazaguanine = 7-cyano-7-carbaguanosine(15) in tRNA + guanine. Its pathway is tRNA modification; archaeosine-tRNA biosynthesis. Exchanges the guanine residue with 7-cyano-7-deazaguanine (preQ0) at position 15 in the dihydrouridine loop (D-loop) of archaeal tRNAs. This is tRNA-guanine(15) transglycosylase from Saccharolobus solfataricus (strain ATCC 35092 / DSM 1617 / JCM 11322 / P2) (Sulfolobus solfataricus).